Consider the following 290-residue polypeptide: 4-hydroxybenzoate octaprenyltransferase (290 aa).

8 consecutive transmembrane segments (helical) span residues 23 to 43 (IGAL…TPGM), 46 to 66 (LWIL…GCVV), 99 to 119 (LFVV…AMTI), 141 to 161 (LPQV…FAAV), 163 to 183 (ESLP…AVAY), 212 to 232 (TLII…IGWL), 233 to 253 (NGLG…FVYQ), and 268 to 288 (AFMN…MSYW).

The protein belongs to the UbiA prenyltransferase family. Mg(2+) is required as a cofactor.

Its subcellular location is the cell inner membrane. The catalysed reaction is all-trans-octaprenyl diphosphate + 4-hydroxybenzoate = 4-hydroxy-3-(all-trans-octaprenyl)benzoate + diphosphate. It functions in the pathway cofactor biosynthesis; ubiquinone biosynthesis. Catalyzes the prenylation of para-hydroxybenzoate (PHB) with an all-trans polyprenyl group. Mediates the second step in the final reaction sequence of ubiquinone-8 (UQ-8) biosynthesis, which is the condensation of the polyisoprenoid side chain with PHB, generating the first membrane-bound Q intermediate 3-octaprenyl-4-hydroxybenzoate. In Salmonella paratyphi C (strain RKS4594), this protein is 4-hydroxybenzoate octaprenyltransferase.